The sequence spans 448 residues: Mitochondrial distribution and morphology protein 10 (448 aa).

2 disordered regions span residues 101 to 126 (QIHP…SEKA) and 366 to 386 (PPLP…PAGE). A compositionally biased stretch (basic and acidic residues) spans 112–126 (NESRHAEPNERSEKA).

The protein belongs to the MDM10 family. Component of the ER-mitochondria encounter structure (ERMES) or MDM complex, composed of MMM1, MDM10, MDM12 and MDM34. Associates with the mitochondrial outer membrane sorting assembly machinery SAM(core) complex.

It is found in the mitochondrion outer membrane. In terms of biological role, component of the ERMES/MDM complex, which serves as a molecular tether to connect the endoplasmic reticulum and mitochondria. Components of this complex are involved in the control of mitochondrial shape and protein biogenesis and may function in phospholipid exchange. MDM10 is involved in the late assembly steps of the general translocase of the mitochondrial outer membrane (TOM complex). Functions in the TOM40-specific route of the assembly of outer membrane beta-barrel proteins, including the association of TOM40 with the receptor TOM22 and small TOM proteins. Can associate with the SAM(core) complex as well as the MDM12-MMM1 complex, both involved in late steps of the major beta-barrel assembly pathway, that is responsible for biogenesis of all outer membrane beta-barrel proteins. May act as a switch that shuttles between both complexes and channels precursor proteins into the TOM40-specific pathway. Plays a role in mitochondrial morphology and in the inheritance of mitochondria. In Coccidioides immitis (strain RS) (Valley fever fungus), this protein is Mitochondrial distribution and morphology protein 10.